A 1251-amino-acid chain; its full sequence is Insulin receptor substrate 1 (1251 aa).

Position 3 is a phosphoserine (Ser3). The segment at 3–137 (SPPESDGFSD…GAGGGGGSCS (135 aa)) is mediates interaction with PHIP. The PH domain maps to 12-115 (DVRKVGYLRK…WYQALLQLHN (104 aa)). A Phosphoserine; by CK2 modification is found at Ser99. Positions 160–264 (FKEVWQVILK…EAMRAMSDEF (105 aa)) constitute an IRS-type PTB domain. Residues 262–430 (DEFRPRSKSQ…SDGGFISSDE (169 aa)) are disordered. Low complexity predominate over residues 269–281 (KSQSSSNCSNPIS). Ser270 is subject to Phosphoserine. Phosphoserine; by RPS6KB1 is present on Ser307. Ser312 is subject to Phosphoserine; by IKKB, MAPK8 and RPS6KB1. Residues Ser323, Ser330, Ser345, and Ser348 each carry the phosphoserine modification. Residues 354-363 (THAHRHRGSA) are compositionally biased toward basic residues. Composition is skewed to low complexity over residues 383 to 404 (SPSA…GSTS) and 412 to 424 (SSAS…SDGG). Position 419 is a phosphoserine (Ser419). Residues Thr446 and Thr453 each carry the phosphothreonine modification. Tyr465 carries the phosphotyrosine; by INSR modification. The YXXM motif 1 signature appears at 465–468 (YICM). The segment at 494-513 (YTPGTGLGTSPALAGDEASS) is disordered. Residue Ser527 is modified to Phosphoserine; by RPS6KB1. The short motif at 551–554 (YTEM) is the YXXM motif 2 element. The span at 594 to 610 (RRGGHHRPDSSTLHTDD) shows a compositional bias: basic and acidic residues. The interval 594–616 (RRGGHHRPDSSTLHTDDGYMPMS) is disordered. Tyr612 carries the post-translational modification Phosphotyrosine; by INSR. Residues 612-615 (YMPM) carry the YXXM motif 3 motif. Ser629 carries the phosphoserine modification. Tyr632 carries the post-translational modification Phosphotyrosine; by INSR. A YXXM motif 4 motif is present at residues 632–635 (YMPM). Residue Ser636 is modified to Phosphoserine; by RPS6KB1. Position 662 is a phosphotyrosine (Tyr662). The YXXM motif 5 motif lies at 662–665 (YMMM). Residues 668–692 (SGGCSPDIGGGPSSSSSSTVPSGSS) are disordered. The YXXM motif 6 signature appears at 730–733 (YMNM). 2 disordered regions span residues 734–753 (SPVG…GPED) and 769–946 (FKHT…EETG). Residues 774 to 783 (RPGEPEEGAR) are compositionally biased toward basic and acidic residues. Residue Ser792 is modified to Phosphoserine; by AMPK and SIK2. Low complexity-rich tracts occupy residues 799–813 (AATA…SSDS) and 875–891 (QQQQ…QQQQ). At Ser901 the chain carries Phosphoserine. Tyr905 bears the Phosphotyrosine; by INSR mark. Residues 905–907 (YVN) form a GRB2-binding region. Polar residues predominate over residues 924-937 (SRSSPSVRCPSQLQ). Residues Tyr950 and Tyr998 each carry the phosphotyrosine; by INSR modification. Short sequence motifs (YXXM motif) lie at residues 950 to 953 (YMKM), 998 to 1001 (YMTM), and 1021 to 1024 (YADM). 2 disordered regions span residues 1091–1124 (NQSA…RVGN) and 1130–1149 (AGAA…DVKR). 2 positions are modified to phosphoserine: Ser1109 and Ser1110. Over residues 1111-1123 (ETFSSTPSATRVG) the composition is skewed to polar residues. Phosphotyrosine; by INSR is present on Tyr1188. Lys1195 participates in a covalent cross-link: Glycyl lysine isopeptide (Lys-Gly) (interchain with G-Cter in ubiquitin). Residues 1195–1251 (KDFKQRPQECTPQPQPPPPPPPHQPLGSSESSSTRRSSEDLSAYASISFQKQPEDLQ) are disordered. The span at 1207-1218 (QPQPPPPPPPHQ) shows a compositional bias: pro residues. Tyr1238 bears the Phosphotyrosine; by INSR mark.

In terms of assembly, interacts with UBTF and PIK3CA. Interacts (via phosphorylated YXXM motifs) with PIK3R1. Interacts with ROCK1 and FER. Interacts (via PH domain) with PHIP. Interacts with GRB2. Interacts with SOCS7. Interacts (via IRS-type PTB domain) with IGF1R and INSR (via the tyrosine-phosphorylated NPXY motif). Interacts with ALK. Interacts with EIF2AK2/PKR. Interacts with GKAP1. Interacts with DGKZ in the absence of insulin; insulin stimulation decreases this interaction. Found in a ternary complex with DGKZ and PIP5K1A in the absence of insulin stimulation. Interacts with SQSTM1; the interaction is disrupted by the presence of tensin TNS2. Interacts with NCK1 (via SH2 domain). Interacts with NCK2 (via SH3 domain). Interacts with SH2B1; this interaction enhances leptin-induced activation of the PI3-kinase pathway. Interacts with DVL2; this interaction promotes the Wnt/beta-catenin signaling pathway. Interacts with JAK1. In terms of processing, serine phosphorylation of IRS1 is a mechanism for insulin resistance. Ser-312 phosphorylation inhibits insulin action through disruption of IRS1 interaction with the insulin receptor. Phosphorylation of Tyr-905 is required for GRB2-binding. Phosphorylated by ALK. Phosphorylated at Ser-270, Ser-307, Ser-636 and Ser-1109 by RPS6KB1; phosphorylation induces accelerated degradation of IRS1. Phosphorylated on tyrosine residues in response to insulin. In skeletal muscles, dephosphorylated on Tyr-612 by TNS2 under anabolic conditions; dephosphorylation results in the proteasomal degradation of IRS1. Ubiquitinated by the Cul7-RING(FBXW8) complex in a mTOR-dependent manner, leading to its degradation: the Cul7-RING(FBXW8) complex recognizes and binds IRS1 previously phosphorylated by S6 kinase (RPS6KB1 or RPS6KB2). Ubiquitinated by TRAF4 through 'Lys-29' linkage; this ubiquitination regulates the interaction of IRS1 with IGFR and IRS1 tyrosine phosphorylation upon IGF1 stimulation. Post-translationally, S-nitrosylation at by BLVRB inhibits its activity.

The protein resides in the cytoplasm. It localises to the nucleus. Its function is as follows. Signaling adapter protein that participates in the signal transduction from two prominent receptor tyrosine kinases, insulin receptor/INSR and insulin-like growth factor I receptor/IGF1R. Plays therefore an important role in development, growth, glucose homeostasis as well as lipid metabolism. Upon phosphorylation by the insulin receptor, functions as a signaling scaffold that propagates insulin action through binding to SH2 domain-containing proteins including the p85 regulatory subunit of PI3K, NCK1, NCK2, GRB2 or SHP2. Recruitment of GRB2 leads to the activation of the guanine nucleotide exchange factor SOS1 which in turn triggers the Ras/Raf/MEK/MAPK signaling cascade. Activation of the PI3K/AKT pathway is responsible for most of insulin metabolic effects in the cell, and the Ras/Raf/MEK/MAPK is involved in the regulation of gene expression and in cooperation with the PI3K pathway regulates cell growth and differentiation. Acts a positive regulator of the Wnt/beta-catenin signaling pathway through suppression of DVL2 autophagy-mediated degradation leading to cell proliferation. In Chlorocebus aethiops (Green monkey), this protein is Insulin receptor substrate 1 (IRS1).